The sequence spans 122 residues: Phosphoribosyl-ATP pyrophosphatase (122 aa).

It belongs to the PRA-PH family.

It is found in the cytoplasm. It carries out the reaction 1-(5-phospho-beta-D-ribosyl)-ATP + H2O = 1-(5-phospho-beta-D-ribosyl)-5'-AMP + diphosphate + H(+). It functions in the pathway amino-acid biosynthesis; L-histidine biosynthesis; L-histidine from 5-phospho-alpha-D-ribose 1-diphosphate: step 2/9. This Burkholderia mallei (strain NCTC 10247) protein is Phosphoribosyl-ATP pyrophosphatase.